The primary structure comprises 227 residues: Ribose-5-phosphate isomerase A (227 aa).

Substrate-binding positions include 28–31 (TGST), 84–87 (DGAD), and 97–100 (KGGG). Catalysis depends on E106, which acts as the Proton acceptor. K124 serves as a coordination point for substrate.

Belongs to the ribose 5-phosphate isomerase family. Homodimer.

It carries out the reaction aldehydo-D-ribose 5-phosphate = D-ribulose 5-phosphate. It participates in carbohydrate degradation; pentose phosphate pathway; D-ribose 5-phosphate from D-ribulose 5-phosphate (non-oxidative stage): step 1/1. Functionally, catalyzes the reversible conversion of ribose-5-phosphate to ribulose 5-phosphate. The chain is Ribose-5-phosphate isomerase A from Lactiplantibacillus plantarum (strain ATCC BAA-793 / NCIMB 8826 / WCFS1) (Lactobacillus plantarum).